Consider the following 386-residue polypeptide: Outer membrane protein assembly factor BamB (386 aa).

A signal peptide spans 1-20 (MKKLFNQVLVAAGVLALLAG). The N-palmitoyl cysteine moiety is linked to residue Cys-21. Residue Cys-21 is the site of S-diacylglycerol cysteine attachment.

It belongs to the BamB family. As to quaternary structure, part of the Bam complex.

The protein resides in the cell outer membrane. In terms of biological role, part of the outer membrane protein assembly complex, which is involved in assembly and insertion of beta-barrel proteins into the outer membrane. This chain is Outer membrane protein assembly factor BamB, found in Vibrio cholerae serotype O1 (strain ATCC 39315 / El Tor Inaba N16961).